Here is a 448-residue protein sequence, read N- to C-terminus: Beclin-1 (448 aa).

The residue at position 1 (methionine 1) is an N-acetylmethionine. Serine 14 and serine 29 each carry phosphoserine. Serine 88, serine 91, and serine 94 each carry phosphoserine; by AMPK. Positions 106–125 match the BH3 motif; the sequence is TMENLSRRLKVTGDLFDIMS. Residues 110–157 form an interaction with BCL2 and BCL2L1 region; that stretch reads LSRRLKVTGDLFDIMSGQTDVDHPLCEECTDTLLDQLDTQLNVTENEC. At threonine 117 the chain carries Phosphothreonine; by DAPK1. A coiled-coil region spans residues 140–267; the sequence is DTLLDQLDTQ…QLDKLKKTNV (128 aa). The evolutionary conserved domain (ECD) stretch occupies residues 243 to 448; it reads DELKSVENQM…AWVSSQFYNK (206 aa). Residues lysine 400 and lysine 435 each participate in a glycyl lysine isopeptide (Lys-Gly) (interchain with G-Cter in ubiquitin) cross-link. Residues 423–448 are required for membrane-association; it reads WTKALKFMLTNLKWGLAWVSSQFYNK.

Belongs to the beclin family. In terms of assembly, a homodimeric form is proposed to exist; this metastable form readily transits to ATG14- or UVRAG-containing complexes with BECN1:UVRAG being more stable than BECN1:ATG14. Component of the PI3K (PI3KC3/PI3K-III/class III phosphatidylinositol 3-kinase) complex the core of which is composed of the catalytic subunit PIK3C3, the regulatory subunit PIK3R4 and BECN1 associating with additional regulatory/auxiliary subunits to form alternative complex forms. Alternative complex forms containing a fourth regulatory subunit in a mutually exclusive manner are PI3K complex I (PI3KC3-C1) containing ATG14, and PI3K complex II (PI3KC3-C2) containing UVRAG. PI3KC3-C1 displays a V-shaped architecture with PIK3R4 serving as a bridge between PIK3C3 and the ATG14:BECN1 subcomplex. Both, PI3KC3-C1 and PI3KC3-C2, can associate with further regulatory subunits, such as RUBCN, SH3GLB1/Bif-1 and AMBRA1. PI3KC3-C1 probably associates with PIK3CB. Forms a complex with PPP2CA and AMBRA1; AMBRA1 and BECN1 components of the complex regulate MYC stability via different pathways. Component of the complex, at least composed of LRPPRC, BECN1 and BCL2; the interactions prevent BECN1 from forming an autophagy-inducing complex with PIK3C3. Interacts with AMBRA1, GOPC, GRID2. Interacts with BCL2 and BCL2L1 isoform Bcl-X(L); the interaction inhibits BECN1 function in promoting autophagy by interfering with the formation of the PI3K complex. Interacts with cytosolic HMGB1; inhibits the interaction of BECN1 and BCL2 leading to promotion of autophagy. Interacts with USP10, USP13, VMP1, DAPK1, RAB39A. Interacts with the poly-Gln domain of ATXN3; the interaction causes deubiquitination at Lys-400 and stabilizes BECN1. Interacts with SLAMF1. Interacts with TRIM5; the interaction causes activation of BECN1 by causing its dissociation from its inhibitors BCL2 and TAB2. Interacts with active ULK1 (phosphorylated on 'Ser-317') and MEFV simultaneously. Interacts with WDR81 and WDR91; negatively regulates the PI3 kinase/PI3K activity associated with endosomal membranes. Interacts with LAPTM4B; competes with EGFR for LAPTM4B binding; regulates EGFR activity. Interacts with TRIM50. Interacts with TRIM16. Interacts with ATG14; this interaction is increased in the absence of TMEM39A. Interacts with WASHC1; preventing interaction with AMBRA1 and the DCX(AMBRA1) complex and subsequent ubiquitination. Interacts with TRIM17. Interacts with BCL2L10/BCL-B (via BH1 domain). Interacts with SH3BGRL. Interacts with IRGM; enhancing BECN1-interacting partners and influencing the composition of the BECN1 complex. Interacts with ARMC3. Interacts with LRPPRC. (Microbial infection) Interacts with African swine fever virus (ASFV) apoptosis regulator Bcl-2 homolog; this interaction allows the virus to inhibit BECN1, and thus autophagy. Phosphorylation at Thr-117 by DAPK1 reduces its interaction with BCL2 and BCL2L1 and promotes induction of autophagy. In response to autophagic stimuli, phosphorylated at serine residues by AMPK in an ATG14-dependent manner, and this phosphorylation is critical for maximally efficient autophagy. Post-translationally, polyubiquitinated by NEDD4, both with 'Lys-11'- and 'Lys-63'-linkages. 'Lys-11'-linked polyubiquitination leads to degradation and is enhanced when the stabilizing interaction partner VPS34 is depleted. Deubiquitinated by USP10 and USP13, leading to stabilize the PIK3C3/VPS34-containing complexes. Polyubiquitinated at Lys-400 with 'Lys-48'-linkages. 'Lys-48'-linked polyubiquitination of Lys-400 leads to degradation. Deubiquitinated by ATXN3, leading to stabilization. Ubiquitinated at Lys-435 via 'Lys-63'-linkage by the DCX(AMBRA1) complex, thereby increasing the association between BECN1 and PIK3C3 to promote PIK3C3 activity. 'Lys-48'-linked ubiquitination by RNF216 leads to proteasomal degradation and autophagy inhibition. In terms of processing, proteolytically processed by caspases including CASP8 and CASP3; the C-terminal fragments lack autophagy-inducing capacity and are proposed to induce apoptosis. Thus the cleavage is proposed to be an determinant to switch from autophagy to apoptosis pathways affecting cellular homeostasis including viral infections and survival of tumor cells.

It is found in the cytoplasm. The protein localises to the golgi apparatus. The protein resides in the trans-Golgi network membrane. It localises to the endosome membrane. Its subcellular location is the endoplasmic reticulum membrane. It is found in the mitochondrion membrane. The protein localises to the cytoplasmic vesicle. The protein resides in the autophagosome. It localises to the mitochondrion. Its subcellular location is the nucleus. Plays a central role in autophagy. Acts as a core subunit of the PI3K complex that mediates formation of phosphatidylinositol 3-phosphate; different complex forms are believed to play a role in multiple membrane trafficking pathways: PI3KC3-C1 is involved in initiation of autophagosomes and PI3KC3-C2 in maturation of autophagosomes and endocytosis. Involved in regulation of degradative endocytic trafficking and required for the abscission step in cytokinesis, probably in the context of PI3KC3-C2. Essential for the formation of PI3KC3-C2 but not PI3KC3-C1 PI3K complex forms. Involved in endocytosis. May play a role in antiviral host defense. In terms of biological role, beclin-1-C 35 kDa localized to mitochondria can promote apoptosis; it induces the mitochondrial translocation of BAX and the release of proapoptotic factors. This is Beclin-1 (BECN1) from Sus scrofa (Pig).